A 429-amino-acid polypeptide reads, in one-letter code: UDP-N-acetylglucosamine 1-carboxyvinyltransferase (429 aa).

22–23 (KN) serves as a coordination point for phosphoenolpyruvate. Residue Arg-102 participates in UDP-N-acetyl-alpha-D-glucosamine binding. Catalysis depends on Cys-126, which acts as the Proton donor. A 2-(S-cysteinyl)pyruvic acid O-phosphothioketal modification is found at Cys-126. UDP-N-acetyl-alpha-D-glucosamine is bound by residues 131–135 (RPVDL), Asp-316, and Ile-338.

Belongs to the EPSP synthase family. MurA subfamily.

It is found in the cytoplasm. It catalyses the reaction phosphoenolpyruvate + UDP-N-acetyl-alpha-D-glucosamine = UDP-N-acetyl-3-O-(1-carboxyvinyl)-alpha-D-glucosamine + phosphate. It functions in the pathway cell wall biogenesis; peptidoglycan biosynthesis. Functionally, cell wall formation. Adds enolpyruvyl to UDP-N-acetylglucosamine. The sequence is that of UDP-N-acetylglucosamine 1-carboxyvinyltransferase from Rhodopseudomonas palustris (strain TIE-1).